Consider the following 511-residue polypeptide: Maturase K (511 aa).

The protein belongs to the intron maturase 2 family. MatK subfamily.

The protein resides in the plastid. Its subcellular location is the chloroplast. Its function is as follows. Usually encoded in the trnK tRNA gene intron. Probably assists in splicing its own and other chloroplast group II introns. The chain is Maturase K from Hordeum vulgare (Barley).